Consider the following 431-residue polypeptide: Adenylosuccinate synthetase (431 aa).

GTP is bound by residues glycine 13–lysine 19 and glycine 41–threonine 43. The active-site Proton acceptor is the aspartate 14. Mg(2+)-binding residues include aspartate 14 and glycine 41. IMP-binding positions include aspartate 14–lysine 17, asparagine 39–histidine 42, threonine 130, arginine 144, glutamine 225, threonine 240, and arginine 304. Residue histidine 42 is the Proton donor of the active site. A substrate-binding site is contributed by alanine 300 to arginine 306. GTP is bound by residues arginine 306, lysine 332–aspartate 334, and serine 415–glycine 417.

Belongs to the adenylosuccinate synthetase family. In terms of assembly, homodimer. Mg(2+) serves as cofactor.

It is found in the cytoplasm. It catalyses the reaction IMP + L-aspartate + GTP = N(6)-(1,2-dicarboxyethyl)-AMP + GDP + phosphate + 2 H(+). Its pathway is purine metabolism; AMP biosynthesis via de novo pathway; AMP from IMP: step 1/2. Its function is as follows. Plays an important role in the de novo pathway of purine nucleotide biosynthesis. Catalyzes the first committed step in the biosynthesis of AMP from IMP. The protein is Adenylosuccinate synthetase of Shewanella piezotolerans (strain WP3 / JCM 13877).